We begin with the raw amino-acid sequence, 243 residues long: UPF0688 protein C1orf174 (243 aa).

2 disordered regions span residues 78–100 (NDSA…AEGS) and 132–243 (LAKT…DAEM). Residues 145–157 (SAGSGAEESNSSS) show a composition bias toward low complexity. Residues Ser148 and Ser189 each carry the phosphoserine modification. The segment covering 233–243 (DDDDDDDDAEM) has biased composition (acidic residues).

It belongs to the UPF0688 family.

Its subcellular location is the nucleus. This Homo sapiens (Human) protein is UPF0688 protein C1orf174 (C1orf174).